The chain runs to 213 residues: MQNKINEKQQKILDFLNEQIEKNGYPPSVREICNAVGFKSTSTVHSYLEKLRKQGLIQKDPSKPRALKVINNKKNSKTDEPKNIYSGKELVEVPIIGKVTAGQPILAVENIEDTFPLPLDFVQNSTVFMLRVQGDSMIEAGIFDNDYIVVKQQSTANNGDIVVALIDDEATVKTFYKEKGFIRLQPANKFYDPIIVRDNLSILGKVIGVFRKM.

Residues 29 to 49 (VREICNAVGFKSTSTVHSYLE) constitute a DNA-binding region (H-T-H motif). Active-site for autocatalytic cleavage activity residues include Ser-136 and Lys-173.

Belongs to the peptidase S24 family. As to quaternary structure, homodimer.

It catalyses the reaction Hydrolysis of Ala-|-Gly bond in repressor LexA.. In terms of biological role, represses a number of genes involved in the response to DNA damage (SOS response), including recA and lexA. In the presence of single-stranded DNA, RecA interacts with LexA causing an autocatalytic cleavage which disrupts the DNA-binding part of LexA, leading to derepression of the SOS regulon and eventually DNA repair. The protein is LexA repressor of Acetivibrio thermocellus (strain ATCC 27405 / DSM 1237 / JCM 9322 / NBRC 103400 / NCIMB 10682 / NRRL B-4536 / VPI 7372) (Clostridium thermocellum).